A 376-amino-acid polypeptide reads, in one-letter code: Chaperone protein DnaJ (376 aa).

The 66-residue stretch at 5-70 folds into the J domain; sequence DYYEVLGVAR…QKRAAYDQFG (66 aa). The CR-type zinc finger occupies 134-212; sequence GTSVKIKVPT…CHGHGRVEET (79 aa). Zn(2+) is bound by residues Cys147, Cys150, Cys164, Cys167, Cys186, Cys189, Cys200, and Cys203. CXXCXGXG motif repeat units lie at residues 147–154, 164–171, 186–193, and 200–207; these read CTNCGGSG, CNTCGGHG, CPTCRGQG, and CNKCHGHG.

The protein belongs to the DnaJ family. As to quaternary structure, homodimer. The cofactor is Zn(2+).

The protein localises to the cytoplasm. Participates actively in the response to hyperosmotic and heat shock by preventing the aggregation of stress-denatured proteins and by disaggregating proteins, also in an autonomous, DnaK-independent fashion. Unfolded proteins bind initially to DnaJ; upon interaction with the DnaJ-bound protein, DnaK hydrolyzes its bound ATP, resulting in the formation of a stable complex. GrpE releases ADP from DnaK; ATP binding to DnaK triggers the release of the substrate protein, thus completing the reaction cycle. Several rounds of ATP-dependent interactions between DnaJ, DnaK and GrpE are required for fully efficient folding. Also involved, together with DnaK and GrpE, in the DNA replication of plasmids through activation of initiation proteins. The protein is Chaperone protein DnaJ of Teredinibacter turnerae (strain ATCC 39867 / T7901).